Consider the following 492-residue polypeptide: Sestrin-3 (492 aa).

Residues L62–I243 are N-terminal domain; may mediate the alkylhydroperoxide reductase activity. The active-site Cysteine sulfenic acid (-SOH) intermediate is the C121. The tract at residues P310 to T492 is C-terminal domain; mediates TORC1 regulation. L-leucine is bound by residues T386–T389, T398, and E463.

Belongs to the sestrin family. As to quaternary structure, interacts with the GATOR2 complex which is composed of MIOS, SEC13, SEH1L, WDR24 and WDR59; the interaction is not regulated by leucine. Interacts with RRAGA, RRAGB, RRAGC and RRAGD; may function as a guanine nucleotide dissociation inhibitor for RRAGs and regulate them. Interacts with the TORC2 complex; through RICTOR. Detected in liver and skeletal muscles.

The protein localises to the cytoplasm. It carries out the reaction a hydroperoxide + L-cysteinyl-[protein] = S-hydroxy-L-cysteinyl-[protein] + an alcohol. Functionally, may function as an intracellular leucine sensor that negatively regulates the TORC1 signaling pathway. May also regulate the insulin-receptor signaling pathway through activation of TORC2. This metabolic regulator may also play a role in protection against oxidative and genotoxic stresses. May prevent the accumulation of reactive oxygen species (ROS) through the alkylhydroperoxide reductase activity born by the N-terminal domain of the protein. This is Sestrin-3 from Mus musculus (Mouse).